Consider the following 227-residue polypeptide: UPF0758 protein CPF_2399 (227 aa).

Residues 105–227 enclose the MPN domain; sequence KISKPSDVAK…FISLKEKDIL (123 aa). Positions 176, 178, and 189 each coordinate Zn(2+). The JAMM motif signature appears at 176–189; that stretch reads HNHPSGDPTPSRDD.

The protein belongs to the UPF0758 family.

In Clostridium perfringens (strain ATCC 13124 / DSM 756 / JCM 1290 / NCIMB 6125 / NCTC 8237 / Type A), this protein is UPF0758 protein CPF_2399.